We begin with the raw amino-acid sequence, 285 residues long: Probable endonuclease 4 (285 aa).

9 residues coordinate Zn(2+): histidine 69, histidine 109, glutamate 145, aspartate 179, histidine 182, histidine 216, aspartate 229, histidine 231, and glutamate 261.

It belongs to the AP endonuclease 2 family. Zn(2+) serves as cofactor.

It catalyses the reaction Endonucleolytic cleavage to 5'-phosphooligonucleotide end-products.. In terms of biological role, endonuclease IV plays a role in DNA repair. It cleaves phosphodiester bonds at apurinic or apyrimidinic (AP) sites, generating a 3'-hydroxyl group and a 5'-terminal sugar phosphate. This is Probable endonuclease 4 from Cronobacter sakazakii (strain ATCC BAA-894) (Enterobacter sakazakii).